An 87-amino-acid polypeptide reads, in one-letter code: MAHKKGASSTRNGRDSNAQYLGVKRFGGQVVKAGEIIVRQRGTHFHPGAGVGRGKDDTLFALEAGAVEFGARGGRRVVNIVVAAAAE.

It belongs to the bacterial ribosomal protein bL27 family.

This Renibacterium salmoninarum (strain ATCC 33209 / DSM 20767 / JCM 11484 / NBRC 15589 / NCIMB 2235) protein is Large ribosomal subunit protein bL27.